The chain runs to 419 residues: Phosphoribosylamine--glycine ligase (419 aa).

One can recognise an ATP-grasp domain in the interval 109-311 (KQLLIEAGVP…LEKVLMACVE (203 aa)). 135 to 191 (ATKMGAPIVVKADGLAAGKGVIVAQTSAEATTAIAELFDQGFEKIVVEEFLPGEEVS) lines the ATP pocket. Residues Glu-281 and Asn-283 each contribute to the Mg(2+) site.

The protein belongs to the GARS family. Mg(2+) is required as a cofactor. Mn(2+) serves as cofactor.

It carries out the reaction 5-phospho-beta-D-ribosylamine + glycine + ATP = N(1)-(5-phospho-beta-D-ribosyl)glycinamide + ADP + phosphate + H(+). It participates in purine metabolism; IMP biosynthesis via de novo pathway; N(1)-(5-phospho-D-ribosyl)glycinamide from 5-phospho-alpha-D-ribose 1-diphosphate: step 2/2. This is Phosphoribosylamine--glycine ligase from Synechocystis sp. (strain ATCC 27184 / PCC 6803 / Kazusa).